We begin with the raw amino-acid sequence, 164 residues long: MNPRRKSRLYLAMVVLIGISLTTTLVLYALRSNIDLFYTPGEILQGKGERHEKPAIGQRLRIGGMVMPGSVQRDAKTLEMSFQVYDARGAVTVTYTGILPDLFREGQGVVAQGVFAEGNTVHAKEVLAKHDEKYTPPEVEEAMKENHSRPAAAYRGTNTTGNAL.

The Cytoplasmic segment spans residues 1–8; that stretch reads MNPRRKSR. The chain crosses the membrane as a helical; Signal-anchor for type II membrane protein span at residues 9–29; sequence LYLAMVVLIGISLTTTLVLYA. Topologically, residues 30–164 are periplasmic; that stretch reads LRSNIDLFYT…RGTNTTGNAL (135 aa). 2 residues coordinate heme: histidine 130 and tyrosine 134. Positions 140–164 are disordered; that stretch reads EEAMKENHSRPAAAYRGTNTTGNAL.

This sequence belongs to the CcmE/CycJ family.

Its subcellular location is the cell inner membrane. Its function is as follows. Heme chaperone required for the biogenesis of c-type cytochromes. Transiently binds heme delivered by CcmC and transfers the heme to apo-cytochromes in a process facilitated by CcmF and CcmH. The polypeptide is Cytochrome c-type biogenesis protein CcmE (Yersinia pseudotuberculosis serotype O:3 (strain YPIII)).